The following is a 75-amino-acid chain: Putative primary metabolism protein HVA1 (75 aa).

Residues 1-13 (MSVQDKQGQNINV) show a composition bias toward polar residues. Disordered regions lie at residues 1-24 (MSVQDKQGQNINVGDTVYTPYRGG) and 40-75 (AAEKGVKNPPKVLFTDQNNKDVAHNPGTLTDLDKQK).

May play a role in primary metabolism. This chain is Putative primary metabolism protein HVA1, found in Cryptococcus neoformans var. grubii serotype A (strain H99 / ATCC 208821 / CBS 10515 / FGSC 9487) (Filobasidiella neoformans var. grubii).